Reading from the N-terminus, the 538-residue chain is Ribulokinase 1 (538 aa).

This sequence belongs to the ribulokinase family.

The enzyme catalyses D-ribulose + ATP = D-ribulose 5-phosphate + ADP + H(+). It carries out the reaction L-ribulose + ATP = L-ribulose 5-phosphate + ADP + H(+). It participates in carbohydrate degradation; L-arabinose degradation via L-ribulose; D-xylulose 5-phosphate from L-arabinose (bacterial route): step 2/3. The sequence is that of Ribulokinase 1 from Staphylococcus saprophyticus subsp. saprophyticus (strain ATCC 15305 / DSM 20229 / NCIMB 8711 / NCTC 7292 / S-41).